The sequence spans 398 residues: 1-deoxy-D-xylulose 5-phosphate reductoisomerase (398 aa).

NADPH-binding residues include Thr-11, Gly-12, Ser-13, Ile-14, Arg-38, Asn-39, and Asn-125. Lys-126 provides a ligand contact to 1-deoxy-D-xylulose 5-phosphate. Glu-127 is a binding site for NADPH. Asp-151 provides a ligand contact to Mn(2+). The 1-deoxy-D-xylulose 5-phosphate site is built by Ser-152, Glu-153, Ser-179, and His-202. Position 153 (Glu-153) interacts with Mn(2+). Residue Gly-208 participates in NADPH binding. 1-deoxy-D-xylulose 5-phosphate contacts are provided by Ser-215, Asn-220, Lys-221, and Glu-224. Glu-224 contributes to the Mn(2+) binding site.

This sequence belongs to the DXR family. Mg(2+) serves as cofactor. Mn(2+) is required as a cofactor.

It carries out the reaction 2-C-methyl-D-erythritol 4-phosphate + NADP(+) = 1-deoxy-D-xylulose 5-phosphate + NADPH + H(+). Its pathway is isoprenoid biosynthesis; isopentenyl diphosphate biosynthesis via DXP pathway; isopentenyl diphosphate from 1-deoxy-D-xylulose 5-phosphate: step 1/6. In terms of biological role, catalyzes the NADPH-dependent rearrangement and reduction of 1-deoxy-D-xylulose-5-phosphate (DXP) to 2-C-methyl-D-erythritol 4-phosphate (MEP). The polypeptide is 1-deoxy-D-xylulose 5-phosphate reductoisomerase (Burkholderia mallei (strain NCTC 10247)).